A 120-amino-acid chain; its full sequence is Large ribosomal subunit protein uL18 (120 aa).

This sequence belongs to the universal ribosomal protein uL18 family. As to quaternary structure, part of the 50S ribosomal subunit; part of the 5S rRNA/L5/L18/L25 subcomplex. Contacts the 5S and 23S rRNAs.

This is one of the proteins that bind and probably mediate the attachment of the 5S RNA into the large ribosomal subunit, where it forms part of the central protuberance. The sequence is that of Large ribosomal subunit protein uL18 from Rhodopseudomonas palustris (strain BisA53).